Reading from the N-terminus, the 216-residue chain is Phosphatidylserine decarboxylase proenzyme (216 aa).

The active-site Schiff-base intermediate with substrate; via pyruvic acid is S182. Residue S182 is modified to Pyruvic acid (Ser); by autocatalysis.

It belongs to the phosphatidylserine decarboxylase family. PSD-A subfamily. Heterodimer of a large membrane-associated beta subunit and a small pyruvoyl-containing alpha subunit. Requires pyruvate as cofactor. Is synthesized initially as an inactive proenzyme. Formation of the active enzyme involves a self-maturation process in which the active site pyruvoyl group is generated from an internal serine residue via an autocatalytic post-translational modification. Two non-identical subunits are generated from the proenzyme in this reaction, and the pyruvate is formed at the N-terminus of the alpha chain, which is derived from the carboxyl end of the proenzyme. The post-translation cleavage follows an unusual pathway, termed non-hydrolytic serinolysis, in which the side chain hydroxyl group of the serine supplies its oxygen atom to form the C-terminus of the beta chain, while the remainder of the serine residue undergoes an oxidative deamination to produce ammonia and the pyruvoyl prosthetic group on the alpha chain.

The protein localises to the cell membrane. It catalyses the reaction a 1,2-diacyl-sn-glycero-3-phospho-L-serine + H(+) = a 1,2-diacyl-sn-glycero-3-phosphoethanolamine + CO2. Its pathway is phospholipid metabolism; phosphatidylethanolamine biosynthesis; phosphatidylethanolamine from CDP-diacylglycerol: step 2/2. In terms of biological role, catalyzes the formation of phosphatidylethanolamine (PtdEtn) from phosphatidylserine (PtdSer). This is Phosphatidylserine decarboxylase proenzyme from Burkholderia pseudomallei (strain 1106a).